Reading from the N-terminus, the 181-residue chain is Transcription termination/antitermination protein NusG (181 aa).

A KOW domain is found at 130-161 (PGEMIRVNDGPFADFNGVVEEVDYEKSRLKVS).

It belongs to the NusG family. In terms of assembly, monomer. Interacts with the transcription termination factor Rho and with RNA polymerase.

Participates in transcription elongation, termination and antitermination. In the absence of Rho, increases the rate of transcription elongation by the RNA polymerase (RNAP), probably by partially suppressing pausing. In the presence of Rho, modulates most Rho-dependent termination events by interacting with the RNAP to render the complex more susceptible to the termination activity of Rho. May be required to overcome a kinetic limitation of Rho to function at certain terminators. Also involved in ribosomal RNA transcriptional antitermination. In Buchnera aphidicola subsp. Acyrthosiphon pisum (strain APS) (Acyrthosiphon pisum symbiotic bacterium), this protein is Transcription termination/antitermination protein NusG.